Reading from the N-terminus, the 811-residue chain is Glycerol-3-phosphate acyltransferase (811 aa).

The HXXXXD motif signature appears at 303 to 308; sequence CHRSHM.

It belongs to the GPAT/DAPAT family.

The protein localises to the cell inner membrane. The enzyme catalyses sn-glycerol 3-phosphate + an acyl-CoA = a 1-acyl-sn-glycero-3-phosphate + CoA. It participates in phospholipid metabolism; CDP-diacylglycerol biosynthesis; CDP-diacylglycerol from sn-glycerol 3-phosphate: step 1/3. The polypeptide is Glycerol-3-phosphate acyltransferase (Glaesserella parasuis serovar 5 (strain SH0165) (Haemophilus parasuis)).